Consider the following 261-residue polypeptide: tRNA (guanine-N(1)-)-methyltransferase (261 aa).

Residues glycine 113 and 133-138 (IGDYVL) contribute to the S-adenosyl-L-methionine site.

It belongs to the RNA methyltransferase TrmD family. Homodimer.

The protein localises to the cytoplasm. It carries out the reaction guanosine(37) in tRNA + S-adenosyl-L-methionine = N(1)-methylguanosine(37) in tRNA + S-adenosyl-L-homocysteine + H(+). In terms of biological role, specifically methylates guanosine-37 in various tRNAs. The polypeptide is tRNA (guanine-N(1)-)-methyltransferase (Xylella fastidiosa (strain M23)).